The primary structure comprises 291 residues: tRNA dimethylallyltransferase (291 aa).

Position 8–15 (glycine 8–threonine 15) interacts with ATP. Threonine 10 to threonine 15 provides a ligand contact to substrate. The interval aspartate 33–cysteine 36 is interaction with substrate tRNA.

It belongs to the IPP transferase family. As to quaternary structure, monomer. It depends on Mg(2+) as a cofactor.

It carries out the reaction adenosine(37) in tRNA + dimethylallyl diphosphate = N(6)-dimethylallyladenosine(37) in tRNA + diphosphate. Its function is as follows. Catalyzes the transfer of a dimethylallyl group onto the adenine at position 37 in tRNAs that read codons beginning with uridine, leading to the formation of N6-(dimethylallyl)adenosine (i(6)A). The sequence is that of tRNA dimethylallyltransferase from Aliarcobacter butzleri (strain RM4018) (Arcobacter butzleri).